A 355-amino-acid polypeptide reads, in one-letter code: Galactoside 2-alpha-L-fucosyltransferase (355 aa).

Residues 1–15 (MRNVKGLFSYMTKTK) lie on the Cytoplasmic side of the membrane. Residues 16-36 (SFYISIIVIIFIIFIVNRMGP) form a helical; Signal-anchor for type II membrane protein membrane-spanning segment. The Lumenal portion of the chain corresponds to 37 to 355 (RNYNYKQIGT…MSRNGSIISK (319 aa)). N-linked (GlcNAc...) asparagine glycosylation is found at asparagine 92, asparagine 311, and asparagine 349.

Belongs to the glycosyltransferase 11 family. As to expression, expression is restricted to the 20 intestinal cells in larvae and adult.

Its subcellular location is the golgi apparatus. The protein resides in the golgi stack membrane. It participates in protein modification; protein glycosylation. Its function is as follows. Selectively catalyzes the addition of fucose in alpha 1-2 linkage to Gal-beta-(1-&gt;4)-Xyl-beta-R, Gal-beta-(1-&gt;6)-GlcNAc-R, Gal-beta-(1-&gt;3)-Gal-beta-(1-&gt;4)-Glc and Gal-beta-(1-&gt;3)-Gal-beta-(1-&gt;4)-Xyl-R acceptors but not Gal-beta-(1-&gt;3)-GlcNAc-beta-(1-&gt;3)-Gal-beta-(1-&gt;4)-Glc. Unlike in mammals, unable to fucosylate Gal-beta-(1-&gt;4)-Glc-beta-R. In Caenorhabditis elegans, this protein is Galactoside 2-alpha-L-fucosyltransferase.